The primary structure comprises 530 residues: Chondroitin sulfate N-acetylgalactosaminyltransferase 1 (530 aa).

At 1-12 the chain is on the cytoplasmic side; that stretch reads MVRRGLLGWISR. The helical; Signal-anchor for type II membrane protein transmembrane segment at 13-33 threads the bilayer; it reads VVILLVLLCCAISVLYMLACT. The Lumenal portion of the chain corresponds to 34–530; the sequence is PKGDQEQLGL…QKQKASSKKT (497 aa). The stretch at 57–93 forms a coiled coil; the sequence is AVLQEREEQHRNYVNSLKRQIAQLKDELQARSEQFRS. The tract at residues 88 to 107 is disordered; the sequence is SEQFRSGQDQASDATSLRSG. The span at 91–105 shows a compositional bias: polar residues; that stretch reads FRSGQDQASDATSLR. Asn-313 and Asn-322 each carry an N-linked (GlcNAc...) asparagine glycan. The a divalent metal cation site is built by Asp-358 and His-475.

The protein belongs to the chondroitin N-acetylgalactosaminyltransferase family.

Its subcellular location is the golgi apparatus. It localises to the golgi stack membrane. It catalyses the reaction 3-O-(beta-D-GlcA-(1-&gt;3)-beta-D-Gal-(1-&gt;3)-beta-D-Gal-(1-&gt;4)-beta-D-Xyl)-L-seryl-[protein] + UDP-N-acetyl-alpha-D-galactosamine = 3-O-(beta-D-GalNAc-(1-&gt;4)-beta-D-GlcA-(1-&gt;3)-beta-D-Gal-(1-&gt;3)-beta-D-Gal-(1-&gt;4)-beta-D-Xyl)-L-seryl-[protein] + UDP + H(+). Its function is as follows. Transfers 1,4-N-acetylgalactosamine (GalNAc) from UDP-GalNAc to the non-reducing end of glucuronic acid (GlcUA). Required for addition of the first GalNAc to the core tetrasaccharide linker and for elongation of chondroitin chains. Important role in chondroitin chain biosynthesis in cartilage formation, and subsequent endochondral ossification. Moreover, is involved in the metabolism of aggrecan. The protein is Chondroitin sulfate N-acetylgalactosaminyltransferase 1 of Mus musculus (Mouse).